Consider the following 452-residue polypeptide: Adenylosuccinate synthetase isozyme 1 (452 aa).

Residues 1–22 form a disordered region; that stretch reads MSGTRASNDRSSHPGGHKRPRY. Residues 37 to 43 and 65 to 67 each bind GTP; these read GDEGKGK and GHT. Asp38 serves as the catalytic Proton acceptor. The Mg(2+) site is built by Asp38 and Gly65. Residue Asp38 coordinates substrate. IMP contacts are provided by residues 38-41, 63-66, Thr158, Arg172, Asn251, Thr266, and Arg330; these read DEGK and NAGH. The Proton donor role is filled by His66. Position 326–332 (326–332) interacts with substrate; sequence VTTGRKR. Residues Arg332, 358-360, and 440-443 contribute to the GTP site; these read KLD and GVGK.

Belongs to the adenylosuccinate synthetase family. Homodimer. Requires Mg(2+) as cofactor.

The protein localises to the cytoplasm. The catalysed reaction is IMP + L-aspartate + GTP = N(6)-(1,2-dicarboxyethyl)-AMP + GDP + phosphate + 2 H(+). The protein operates within purine metabolism; AMP biosynthesis via de novo pathway; AMP from IMP: step 1/2. Component of the purine nucleotide cycle (PNC), which interconverts IMP and AMP to regulate the nucleotide levels in various tissues, and which contributes to glycolysis and ammoniagenesis. Catalyzes the first committed step in the biosynthesis of AMP from IMP. This Xenopus tropicalis (Western clawed frog) protein is Adenylosuccinate synthetase isozyme 1 (adss1).